The primary structure comprises 216 residues: Cyclic AMP receptor protein (216 aa).

An a nucleoside 3',5'-cyclic phosphate-binding site is contributed by 6–126 (LFHGLAPEEV…HNLAALLARR (121 aa)). 3',5'-cyclic AMP contacts are provided by residues 75-78 (GEMS) and 85-86 (RS). In terms of domain architecture, HTH crp-type spans 140–206 (EEARNRVAYA…PGTVEVREAA (67 aa)). Residues 166-185 (HHELAALAGTSRETVSRVLH) constitute a DNA-binding region (H-T-H motif).

In terms of assembly, homodimer.

In terms of biological role, activates transcription. Positively regulates six promoters upstream of the TTHB186, TTHB147, TTHB178, TTHB159, TTHA0771 and TTHA0176 genes in a cAMP-dependent manner. Regulated genes include clustered regularly interspaced short palindromic repeat (CRISPR) associated (Cas) genes, and the genes encoding a putative transcriptional regulator, a protein containing the exonuclease III-like domain of DNA polymerase, a GCN5-related acetyltransferase homolog, and some T.thermophilus-specific proteins of unknown function. The consensus DNA-binding site of this transcriptional regulator is 5'-(CT)NNG(G/T)(G/T)C(A/C)N(A/T)NNTCACAN(G/C)(G/C)-3' in which N is G, A, T or C. This chain is Cyclic AMP receptor protein, found in Thermus thermophilus (strain ATCC 27634 / DSM 579 / HB8).